Reading from the N-terminus, the 288-residue chain is Serine/threonine-protein phosphatase PGAM5, mitochondrial (288 aa).

Residues 1–6 (MAFRQA) are Mitochondrial matrix-facing. The chain crosses the membrane as a helical span at residues 7–29 (LQLAACGLAGGSAAVLFSAVAVG). Residues 30 to 288 (KPRGGGDADT…FMPPDKITRS (259 aa)) lie on the Mitochondrial intermembrane side of the membrane. Positions 76–81 (NVESGE) are interaction with KEAP1. Residues serine 79 and serine 86 each carry the phosphoserine modification. 3 positions are modified to N6-acetyllysine: lysine 115, lysine 143, and lysine 190.

Belongs to the phosphoglycerate mutase family. BPG-dependent PGAM subfamily. Dimer. Forms a ternary complex with NFE2L2 and KEAP1. Interacts with BCL2L1 and MAP3K5. Upon TNF-induced necrosis, forms in complex with RIPK1, RIPK3 and MLKL; the formation of this complex leads to PGAM5 phosphorylation. Isoform 2, but not isoform 1, interacts with DNM1L; this interaction leads to DNM1L dephosphorylation and activation and eventually to mitochondria fragmentation. In terms of processing, phosphorylated by the RIPK1/RIPK3 complex under necrotic conditions. This phosphorylation increases PGAM5 phosphatase activity. Post-translationally, proteolytically cleaved by PARL in response to loss of mitochondrial membrane potential.

Its subcellular location is the mitochondrion outer membrane. The protein resides in the mitochondrion inner membrane. The catalysed reaction is O-phospho-L-seryl-[protein] + H2O = L-seryl-[protein] + phosphate. The enzyme catalyses O-phospho-L-threonyl-[protein] + H2O = L-threonyl-[protein] + phosphate. Its function is as follows. Mitochondrial serine/threonine phosphatase that dephosphorylates various substrates and thus plays a role in different biological processes including cellular senescence or mitophagy. Modulates cellular senescence by regulating mitochondrial dynamics. Mechanistically, participates in mitochondrial fission through dephosphorylating DNM1L/DRP1. Additionally, dephosphorylates MFN2 in a stress-sensitive manner and consequently protects it from ubiquitination and degradation to promote mitochondrial network formation. Regulates mitophagy independent of PARKIN by interacting with and dephosphorylating FUNDC1, which interacts with LC3. Regulates anti-oxidative response by forming a tertiary complex with KEAP1 and NRF2. Regulates necroptosis by acting as a RIPK3 target and recruiting the RIPK1-RIPK3-MLKL necrosis 'attack' complex to mitochondria. This is Serine/threonine-protein phosphatase PGAM5, mitochondrial (Pgam5) from Mus musculus (Mouse).